The chain runs to 132 residues: Agouti-signaling protein (132 aa).

The first 22 residues, 1–22, serve as a signal peptide directing secretion; the sequence is MDVTXLLLATLLVFLCCFAAYS. Residue N39 is glycosylated (N-linked (GlcNAc...) asparagine). Residues 62–93 are disordered; the sequence is ISRKEAENKRSSKKEASKQKVARPRTPLSVPC. The segment covering 64–79 has biased composition (basic and acidic residues); it reads RKEAENKRSSKKEASK. 5 disulfides stabilise this stretch: C93–C108, C100–C114, C107–C125, C111–C132, and C116–C123. Residues 93-132 enclose the Agouti domain; sequence CVSTRGSCKPPAPACCHPCASCQCRFFRSACSCRVINVNC.

It localises to the secreted. In terms of biological role, involved in the regulation of melanogenesis. The binding of ASP to MC1R precludes alpha-MSH initiated signaling and thus blocks production of cAMP, leading to a down-regulation of eumelanogenesis (brown/black pigment) and thus increasing synthesis of pheomelanin (yellow/red pigment). The polypeptide is Agouti-signaling protein (ASIP) (Leontopithecus chrysomelas (Golden-headed lion tamarin)).